We begin with the raw amino-acid sequence, 500 residues long: Kynurenine 3-monooxygenase acdD (500 aa).

FAD is bound by residues Val17 and 36 to 38 (ELR). Residue Asn50 is glycosylated (N-linked (GlcNAc...) asparagine). FAD is bound at residue Ala58. Residues Arg89 and Tyr106 each contribute to the L-kynurenine site. FAD contacts are provided by Arg118 and Leu143. Asn163 carries an N-linked (GlcNAc...) asparagine glycan. Residues Asp321 and 332–335 (QGLN) contribute to the FAD site. L-kynurenine-binding residues include Asn392 and Tyr428. A helical transmembrane segment spans residues 451–471 (LLLYGSISAIISSAAIVGVLA).

Belongs to the aromatic-ring hydroxylase family. KMO subfamily. It depends on FAD as a cofactor.

It is found in the mitochondrion outer membrane. The enzyme catalyses L-kynurenine + NADPH + O2 + H(+) = 3-hydroxy-L-kynurenine + NADP(+) + H2O. The protein operates within secondary metabolite biosynthesis. It participates in cofactor biosynthesis; NAD(+) biosynthesis; quinolinate from L-kynurenine: step 1/3. In terms of biological role, indoleamine 2,3-dioxygenase; part of the gene cluster that mediates the biosynthesis of aspcandine, a pyrrolobenzazepine alkaloid. Initially, the indoleamine 2,3-dioxygenase acdA accepts L-tryptophan and performs the oxidative opening of the indole ring to yield N'-formyl-L-kynurenine, which undergoes the spontaneous deformylation reaction to provide L-kynurenine. The kynurenine 3-monooxygenase acdD then hydroxylates L-kynurenine to afford 3-hydroxy-L-kynurenine. 3-hydroxy-L-kynurenine is activated by the A domain of the NRPS-PKS acdB and subsequently loaded onto the enzyme. The KS domain conducts the decarboxylative condensation of the 3-hydroxy-L-kynurenyl and malonyl moieties, and subsequent nucleophilic attacks by the two amino groups would occur nonenzymatically at two distinct positions, achieving the chain release and the construction of the tricyclic system. Finally, the dehydration reaction completes the biosynthesis to yield aspcandine. The polypeptide is Kynurenine 3-monooxygenase acdD (Aspergillus candidus).